Consider the following 92-residue polypeptide: Small ribosomal subunit protein uS19 (92 aa).

It belongs to the universal ribosomal protein uS19 family.

Functionally, protein S19 forms a complex with S13 that binds strongly to the 16S ribosomal RNA. This chain is Small ribosomal subunit protein uS19, found in Geobacillus kaustophilus (strain HTA426).